A 499-amino-acid chain; its full sequence is MYVSSLKFPFLGIGVWKGVRLWRQRSLGTSACALKQDDFIKELDQNFVRLQKKLMDSLPSSDWSPFTPTGDLPPERADVVIVGGGVMGWSIAYWLKQKENRRGALKVVVVERDPTYSRASTVLSAGGIRQQFSRPENIQMSLFSAQFLRNINEHLGVVNEDRIDIQFNPSGYLFLASEEGATIMEENYNVQRECGAQVTLMLPDQLKKKFPWINTNGVALASYGLENEGWFDPWTLLNAFRRKALSMGVYQCHGEVTDFSTAKREMITADGDPVTFSRIGHVTVQMPNSLESQSVECSLVINAAGAWSSKVAELAGIGTGPSNSLEGIKLPVEPKKRYVYVVHCPNGPGLDCPLLIDNSGAYFRREGLGGNYIAGKSPAEEEEPDISNMEVDHDFFQEKVWPLLAHRVPAFESLKVKTSWAGYYDYNTYDQNGVVGMHPLVNNLFFATGFSGHGLQHSPAVGRAVAELIVDGGFKTLNLSSFSFRRFWSQEPLLERNIV.

Residues 75–95 (ERADVVIVGGGVMGWSIAYWL) traverse the membrane as a helical segment.

It depends on FAD as a cofactor.

Its subcellular location is the mitochondrion inner membrane. Required for the assembly of the mitochondrial membrane respiratory chain NADH dehydrogenase (Complex I). Involved in mid-late stages of complex I assembly. The sequence is that of FAD-dependent oxidoreductase domain-containing protein 1 (foxred1) from Xenopus laevis (African clawed frog).